Consider the following 197-residue polypeptide: Probable host range protein 2 (197 aa).

The segment at 172 to 197 (DHDDNDNADDDEEDDDEVNDIEDDYE) is disordered. The segment covering 174-197 (DDNDNADDDEEDDDEVNDIEDDYE) has biased composition (acidic residues).

It belongs to the poxviridae C7 protein family.

This is Probable host range protein 2 from Ovis aries (Sheep).